The following is a 261-amino-acid chain: Zaragozic acid A biosynthesis cluster protein 8 (261 aa).

Residues 242–254 show a composition bias toward polar residues; it reads GTRSHTPAATQRR. The segment at 242-261 is disordered; sequence GTRSHTPAATQRRGQGRGCG.

It participates in secondary metabolite biosynthesis. Its function is as follows. Part of the gene cluster that mediates the biosynthesis of squalestatin S1 (SQS1, also known as zaragozic acid A), a heavily oxidized fungal polyketide that offers potent cholesterol lowering activity by targeting squalene synthase (SS). SQS1 is composed of a 2,8-dioxobicyclic[3.2.1]octane-3,4,5-tricarboxyclic acid core that is connected to two lipophilic polyketide arms. These initial steps feature the priming of an unusual benzoic acid starter unit onto the highly reducing polyketide synthase clz14, followed by oxaloacetate extension and product release to generate a tricarboxylic acid containing product. The phenylalanine ammonia lyase (PAL) clz10 and the acyl-CoA ligase clz12 are involved in transforming phenylalanine into benzoyl-CoA. The citrate synthase-like protein clz17 is involved in connecting the C-alpha-carbons of the hexaketide chain and oxaloacetate to afford the tricarboxylic acid unit. The potential hydrolytic enzymes, clz11 and clz13, are in close proximity to pks2 and may participate in product release. On the other side, the tetraketide arm is synthesized by a the squalestatin tetraketide synthase clz2 and enzymatically esterified to the core in the last biosynthetic step, by the acetyltransferase clz6. The biosynthesis of the tetraketide must involve 3 rounds of chain extension. After the first and second rounds methyl-transfer occurs, and in all rounds of extension the ketoreductase and dehydratase are active. The enoyl reductase and C-MeT of clz2 are not active in the final round of extension. The acetyltransferase clz6 appears to have a broad substrate selectivity for its acyl CoA substrate, allowing the in vitro synthesis of novel squalestatins. The biosynthesis of SQS1 requires several oxidative steps likely performed by oxidoreductases clz3, clz15 and clz16. Finally, in support of the identification of the cluster as being responsible for SQS1 production, the cluster contains a gene encoding a putative squalene synthase (SS) clz20, suggesting a likely mechanism for self-resistance. This chain is Zaragozic acid A biosynthesis cluster protein 8, found in Cochliobolus lunatus (Filamentous fungus).